We begin with the raw amino-acid sequence, 899 residues long: MYKIKNNESDINSDDCNETAQECIYGFSSPKKSRKESPIFVQNNDDTCSSNNIYEKKTCSNTSASSVKKYDKKEQSLCSDINNYNKVNIEGLKINERNYDRINNSEEETNINDDNNDDNNGDYDDDNNSDDDDDNDDNNNNDDNNNDDDEDVDDFEDIKENDEYKDPTYSDIYKEAKKCNIRCENIMNSSVNKKNLEEINESDPLNSSDNSMTSSSEESCSEESDKESDKESDKDGNLYDEELNEIIEEGYFKELIPAIPHDILQAYISCLKICGFERQVQLHRLINLLGDLRDPISVIQILGLPGMGKTKVVKNFIKLTNVPFAYVNCLMAVYQSGRSAKNVIYHTILKDLSINLLNEFNEYKKINNITNYSYDPTKLVPNHVSNTDNFFSILHKLLSFKPEDILNNKRTTENIRSPSNSNNNKKKKKEQNDSTGKNSKEECNNNEDDDDDNNKNNFNNNNSNNVRFNSNTNYYKDKLYDRSVVFILDNIRYLVRTHPDLFYALTRIHEYIKGPYNDVTKANKTTRGLCIILINRSPLPDEIFDGLPQPPTVWFDSYTSEMCKNILYRLYNSMCFESLLTYNDKDLKIYYVKHNKNEFLIKRNDVILENDVIYDIWCRYVDYIINVSYKDYKSDFHELLFICSHMWPLFIKPILDGVLEPIVENMNALQRNIDTHIRVATYNHSSHFTFELIDSVFLNENNLKNKIDLSFYSKILLVGAYLASRNLPLTDKRFFNATVKGGAFTLPKKRKGKNKNESILTLLSKSIPKNFTFIRWLCLTDCLLVCFFDEQLILNSLICQQINTLIQLGFISFSSPNNLSCLVRNSLMNGVQWSGYCGSALLNTTTNFSSLTNNIFCETNNSMTYESLDPYTKLVIQVPEETIRNISKEMKIPLDELII.

Disordered regions lie at residues 27-47, 100-166, and 194-238; these read FSSP…NDDT, DRIN…EYKD, and KNLE…DGNL. Residues 105-160 are compositionally biased toward acidic residues; the sequence is SEEETNINDDNNDDNNGDYDDDNNSDDDDDNDDNNNNDDNNNDDDEDVDDFEDIKE. Positions 207 to 218 are enriched in low complexity; the sequence is SSDNSMTSSSEE. A compositionally biased stretch (basic and acidic residues) spans 227-237; sequence ESDKESDKDGN. Residue 303-310 coordinates ATP; that stretch reads GLPGMGKT. A disordered region spans residues 409–469; it reads KRTTENIRSP…NNNSNNVRFN (61 aa). Over residues 455–469 the composition is skewed to low complexity; the sequence is KNNFNNNNSNNVRFN.

It belongs to the ORC5 family. In terms of assembly, component of the origin recognition complex (ORC). Interacts with PCNA1; the interaction occurs during the trophozoite stage but not at the late schizont stage.

Its subcellular location is the nucleus. It catalyses the reaction ATP + H2O = ADP + phosphate + H(+). Its function is as follows. Component of the origin recognition complex (ORC) that binds origins of replication. In Plasmodium falciparum (isolate 3D7), this protein is Origin recognition complex subunit 5.